Here is a 1641-residue protein sequence, read N- to C-terminus: Lysine-specific demethylase 6B (1641 aa).

Disordered stretches follow at residues 42 to 89 (LPGG…LHGK), 188 to 682 (YGAK…PLED), 704 to 808 (LDES…LLKS), and 824 to 1085 (GAAV…VSRA). Over residues 214–223 (LSGPSGEEGL) the composition is skewed to low complexity. Ser-224 is modified (phosphoserine). Over residues 242–268 (PGLPLPPPPPPPPPPPPPPPPPPPPLP) the composition is skewed to pro residues. A compositionally biased stretch (basic and acidic residues) spans 293 to 309 (GPERKGSAPPERQEQRH). A compositionally biased stretch (low complexity) spans 312–326 (PHSYPYPAPAYSAHP). Residues 361–372 (DLRESRVQRSRM) show a composition bias toward basic and acidic residues. A compositionally biased stretch (low complexity) spans 396–415 (PGTSSSSSSSSSSNNTGLRG). The segment covering 467–488 (PGTPSSPPPPCPRLLRPPPPPA) has biased composition (pro residues). The segment covering 552–568 (TTTSSSSSSNSHSSSPT) has biased composition (low complexity). Composition is skewed to pro residues over residues 597–613 (QDPP…PAPP) and 645–660 (GPPP…PVPP). The segment covering 704-713 (LDESIRKEEE) has biased composition (basic and acidic residues). Over residues 743 to 766 (TAPATTTAAPTTATTTTTTTTTTT) the composition is skewed to low complexity. A compositionally biased stretch (pro residues) spans 774 to 801 (PPALPPPPPLAKFPPPPQPQPPPPPPAS). A compositionally biased stretch (low complexity) spans 855 to 879 (VAPSAQGSPKPSVSSSSQFSTSGGP). Residues 891-908 (APGPVTPAQLPPPLPLPP) show a composition bias toward pro residues. Residues 918 to 931 (EISRACETLVERVG) show a composition bias toward basic and acidic residues. Over residues 974–987 (GKRRQKEHRRHRRA) the composition is skewed to basic residues. The span at 988–1001 (CRDSVGRRPREGRA) shows a compositional bias: basic and acidic residues. Over residues 1002–1014 (KAKAKAPKEKSRR) the composition is skewed to basic residues. Pro residues predominate over residues 1047–1066 (APAPPPAPAPAAQPTPPSAP). A Glycyl lysine isopeptide (Lys-Gly) (interchain with G-Cter in SUMO2) cross-link involves residue Lys-1107. The tract at residues 1286-1323 (FQESLQEERESEDEESEEPDSTTGTSPSSAPDPKNHHI) is disordered. Positions 1294-1305 (RESEDEESEEPD) are enriched in acidic residues. The segment covering 1306-1317 (STTGTSPSSAPD) has biased composition (low complexity). Residues 1337–1500 (RWKPQLQELL…YQLALERYEW (164 aa)) form the JmjC domain. The Fe cation site is built by His-1388, Glu-1390, and His-1468. Zn(2+) is bound by residues Cys-1573, Cys-1576, Cys-1600, and Cys-1603.

It belongs to the UTX family. As to quaternary structure, interacts with TLE1. Component of the MLL4 complex, at least composed of KMT2B/MLL4, ASH2L, RBBP5, WDR5, and KDM6B. Interacts with TBX21, SMARCA4, SMARCC1 and SMARCC2. It depends on L-ascorbate as a cofactor. Fe(2+) serves as cofactor.

It is found in the nucleus. It catalyses the reaction N(6),N(6),N(6)-trimethyl-L-lysyl(27)-[histone H3] + 2 2-oxoglutarate + 2 O2 = N(6)-methyl-L-lysyl(27)-[histone H3] + 2 formaldehyde + 2 succinate + 2 CO2. In terms of biological role, histone demethylase that specifically demethylates 'Lys-27' of histone H3, thereby playing a central role in histone code. Demethylates trimethylated and dimethylated H3 'Lys-27'. Plays a central role in regulation of posterior development, by regulating HOX gene expression. Involved in inflammatory response by participating in macrophage differentiation in case of inflammation by regulating gene expression and macrophage differentiation. Plays a demethylase-independent role in chromatin remodeling to regulate T-box family member-dependent gene expression by acting as a link between T-box factors and the SMARCA4-containing SWI/SNF remodeling complex. This Mus musculus (Mouse) protein is Lysine-specific demethylase 6B (Kdm6b).